Here is a 214-residue protein sequence, read N- to C-terminus: Adenylate kinase (214 aa).

10-15 is an ATP binding site; it reads GAGKGT. The interval 30–59 is NMP; that stretch reads STGDMLRAAIKAGTELGKQAKAVIDAGQLV. AMP-binding positions include Thr-31, Arg-36, 57-59, 85-88, and Gln-92; these read QLV and GFPR. Residues 122–159 form an LID region; the sequence is GRRAHLPSGRTYHVVYNPPKVEGKDDVTGEDLVVRDDD. Residues Arg-123 and 132–133 each bind ATP; that span reads TY. Residues Arg-156 and Arg-167 each contribute to the AMP site. Lys-200 is a binding site for ATP.

Belongs to the adenylate kinase family. As to quaternary structure, monomer.

It localises to the cytoplasm. It carries out the reaction AMP + ATP = 2 ADP. Its pathway is purine metabolism; AMP biosynthesis via salvage pathway; AMP from ADP: step 1/1. Catalyzes the reversible transfer of the terminal phosphate group between ATP and AMP. Plays an important role in cellular energy homeostasis and in adenine nucleotide metabolism. This chain is Adenylate kinase, found in Vibrio parahaemolyticus serotype O3:K6 (strain RIMD 2210633).